A 188-amino-acid polypeptide reads, in one-letter code: dTTP/UTP pyrophosphatase (188 aa).

Residue aspartate 70 is the Proton acceptor of the active site.

This sequence belongs to the Maf family. YhdE subfamily. Requires a divalent metal cation as cofactor.

Its subcellular location is the cytoplasm. The catalysed reaction is dTTP + H2O = dTMP + diphosphate + H(+). It carries out the reaction UTP + H2O = UMP + diphosphate + H(+). Nucleoside triphosphate pyrophosphatase that hydrolyzes dTTP and UTP. May have a dual role in cell division arrest and in preventing the incorporation of modified nucleotides into cellular nucleic acids. The chain is dTTP/UTP pyrophosphatase from Clostridium botulinum (strain Eklund 17B / Type B).